A 756-amino-acid polypeptide reads, in one-letter code: Ribosomal RNA large subunit methyltransferase K/L (756 aa).

The 112-residue stretch at Thr46 to Leu157 folds into the THUMP domain. A compositionally biased stretch (basic and acidic residues) spans Glu395–Ala409. Positions Glu395–Glu441 are disordered.

This sequence belongs to the methyltransferase superfamily. RlmKL family.

It localises to the cytoplasm. The enzyme catalyses guanosine(2445) in 23S rRNA + S-adenosyl-L-methionine = N(2)-methylguanosine(2445) in 23S rRNA + S-adenosyl-L-homocysteine + H(+). The catalysed reaction is guanosine(2069) in 23S rRNA + S-adenosyl-L-methionine = N(2)-methylguanosine(2069) in 23S rRNA + S-adenosyl-L-homocysteine + H(+). In terms of biological role, specifically methylates the guanine in position 2445 (m2G2445) and the guanine in position 2069 (m7G2069) of 23S rRNA. This chain is Ribosomal RNA large subunit methyltransferase K/L, found in Pseudomonas fluorescens (strain Pf0-1).